A 269-amino-acid polypeptide reads, in one-letter code: 5'-nucleotidase SurE (269 aa).

Residues Asp-11, Asp-12, Ser-43, and Asn-101 each coordinate a divalent metal cation.

This sequence belongs to the SurE nucleotidase family. Requires a divalent metal cation as cofactor.

Its subcellular location is the cytoplasm. The catalysed reaction is a ribonucleoside 5'-phosphate + H2O = a ribonucleoside + phosphate. In terms of biological role, nucleotidase that shows phosphatase activity on nucleoside 5'-monophosphates. In Synechococcus sp. (strain CC9902), this protein is 5'-nucleotidase SurE.